We begin with the raw amino-acid sequence, 430 residues long: MSQLRATKSGLVVRAVICIFIFLYLRNPTPAESEEEPAQPEVVECGFYPDELCSALFEGKGAAPQIAKFCKTPHKSEIHAHLHTPGNCSRISRGLHFITRPLSAEEGDFSLAYIITIHKELAMFVQLLRAIYVPQNVYCIHVDEKAPMKYKTAVQTLVNCFENVFISSKTEKVAYAGFTRLQADINCMKVLVHSKFQWNYVINLCGQDFPIKTNREIIHYIRSKWSDKNITPGVIQPLHIKSKTSQSHLEFVPKGSIYAPPNNRFKDKPPHNLTIYFGSAYYVLTRKFVEFILTDIHAKDMLQWSKDIRSPEQHYWVTLNRLKDAPGATPNAGWEGNVRAIKRKSEEGNVHDGCKGRYVEDICVYGPGDLPWLIQSPSLFANKFEPSTDPLVVTCLERRHRLQVLRQAEVPIEPHWHFQQQSHFNMRLNR.

Over 1–8 (MSQLRATK) the chain is Cytoplasmic. Residues 9 to 25 (SGLVVRAVICIFIFLYL) traverse the membrane as a helical; Signal-anchor for type II membrane protein segment. Residues 26–430 (RNPTPAESEE…QSHFNMRLNR (405 aa)) are Extracellular-facing. 4 disulfide bridges follow: cysteine 53/cysteine 205, cysteine 139/cysteine 354, cysteine 160/cysteine 187, and cysteine 363/cysteine 395. Asparagine 87 carries N-linked (GlcNAc...) asparagine glycosylation. An N-linked (GlcNAc...) asparagine glycan is attached at asparagine 272.

Belongs to the glycosyltransferase 14 family.

The protein localises to the golgi apparatus membrane. Its pathway is protein modification; protein glycosylation. Probable glycosyltransferase. This is Probable beta-1,3-galactosyl-O-glycosyl-glycoprotein beta-1,6-N-acetylglucosaminyltransferase 7 from Homo sapiens (Human).